We begin with the raw amino-acid sequence, 72 residues long: Cell division protein ZapB (72 aa).

Residues 5-71 (ILDQLEEKIK…LRSLLGQIDN (67 aa)) are a coiled coil.

The protein belongs to the ZapB family. As to quaternary structure, homodimer. The ends of the coiled-coil dimer bind to each other, forming polymers. Interacts with FtsZ.

It is found in the cytoplasm. In terms of biological role, non-essential, abundant cell division factor that is required for proper Z-ring formation. It is recruited early to the divisome by direct interaction with FtsZ, stimulating Z-ring assembly and thereby promoting cell division earlier in the cell cycle. Its recruitment to the Z-ring requires functional FtsA or ZipA. This Actinobacillus pleuropneumoniae serotype 5b (strain L20) protein is Cell division protein ZapB.